We begin with the raw amino-acid sequence, 145 residues long: Ribosome maturation factor RimP (145 aa).

Belongs to the RimP family.

Its subcellular location is the cytoplasm. Functionally, required for maturation of 30S ribosomal subunits. This is Ribosome maturation factor RimP from Azotobacter vinelandii (strain DJ / ATCC BAA-1303).